A 614-amino-acid chain; its full sequence is DNA mismatch repair protein MutL (614 aa).

This sequence belongs to the DNA mismatch repair MutL/HexB family.

In terms of biological role, this protein is involved in the repair of mismatches in DNA. It is required for dam-dependent methyl-directed DNA mismatch repair. May act as a 'molecular matchmaker', a protein that promotes the formation of a stable complex between two or more DNA-binding proteins in an ATP-dependent manner without itself being part of a final effector complex. This Thermoanaerobacter sp. (strain X514) protein is DNA mismatch repair protein MutL.